We begin with the raw amino-acid sequence, 377 residues long: Protein RecA (377 aa).

76–83 (GPESSGKT) contributes to the ATP binding site. The disordered stretch occupies residues 346–377 (TNGNNGEDHEGTEPVEIEAEDAAPKKGKKGKH).

Belongs to the RecA family.

The protein resides in the cytoplasm. Its function is as follows. Can catalyze the hydrolysis of ATP in the presence of single-stranded DNA, the ATP-dependent uptake of single-stranded DNA by duplex DNA, and the ATP-dependent hybridization of homologous single-stranded DNAs. It interacts with LexA causing its activation and leading to its autocatalytic cleavage. This is Protein RecA from Bdellovibrio bacteriovorus (strain ATCC 15356 / DSM 50701 / NCIMB 9529 / HD100).